The sequence spans 461 residues: Bifunctional protein GlmU (461 aa).

Residues 1–235 (MKAIILAAGL…ITEIFGVNDR (235 aa)) are pyrophosphorylase. UDP-N-acetyl-alpha-D-glucosamine-binding positions include 6 to 9 (LAAG), Lys20, Gln71, and 77 to 78 (GT). A Mg(2+)-binding site is contributed by Asp102. UDP-N-acetyl-alpha-D-glucosamine-binding residues include Gly145, Glu160, Asn175, and Asn233. Asn233 serves as a coordination point for Mg(2+). Positions 236 to 256 (WELSFAESVIKMRILENLARS) are linker. Positions 257–461 (GVTIHSPESV…LEDKSKVKDE (205 aa)) are N-acetyltransferase. UDP-N-acetyl-alpha-D-glucosamine is bound by residues Arg339 and Lys357. The Proton acceptor role is filled by His369. Residues Tyr372 and Asn383 each coordinate UDP-N-acetyl-alpha-D-glucosamine. Positions 386, 411, 429, and 446 each coordinate acetyl-CoA.

This sequence in the N-terminal section; belongs to the N-acetylglucosamine-1-phosphate uridyltransferase family. In the C-terminal section; belongs to the transferase hexapeptide repeat family. Homotrimer. It depends on Mg(2+) as a cofactor.

It localises to the cytoplasm. It carries out the reaction alpha-D-glucosamine 1-phosphate + acetyl-CoA = N-acetyl-alpha-D-glucosamine 1-phosphate + CoA + H(+). The enzyme catalyses N-acetyl-alpha-D-glucosamine 1-phosphate + UTP + H(+) = UDP-N-acetyl-alpha-D-glucosamine + diphosphate. Its pathway is nucleotide-sugar biosynthesis; UDP-N-acetyl-alpha-D-glucosamine biosynthesis; N-acetyl-alpha-D-glucosamine 1-phosphate from alpha-D-glucosamine 6-phosphate (route II): step 2/2. The protein operates within nucleotide-sugar biosynthesis; UDP-N-acetyl-alpha-D-glucosamine biosynthesis; UDP-N-acetyl-alpha-D-glucosamine from N-acetyl-alpha-D-glucosamine 1-phosphate: step 1/1. It participates in bacterial outer membrane biogenesis; LPS lipid A biosynthesis. In terms of biological role, catalyzes the last two sequential reactions in the de novo biosynthetic pathway for UDP-N-acetylglucosamine (UDP-GlcNAc). The C-terminal domain catalyzes the transfer of acetyl group from acetyl coenzyme A to glucosamine-1-phosphate (GlcN-1-P) to produce N-acetylglucosamine-1-phosphate (GlcNAc-1-P), which is converted into UDP-GlcNAc by the transfer of uridine 5-monophosphate (from uridine 5-triphosphate), a reaction catalyzed by the N-terminal domain. The sequence is that of Bifunctional protein GlmU from Hydrogenobaculum sp. (strain Y04AAS1).